The primary structure comprises 1160 residues: Transcription factor tau 138 kDa subunit (1160 aa).

Residues 475-533 form a disordered region; it reads PNSKKTPNKNKRKRQVKNSTNASVAGNISNPKRIKLEQHVSTAQEPKSAEDSPSSNGGT. Residues 480-490 show a composition bias toward basic residues; sequence TPNKNKRKRQV. 2 stretches are compositionally biased toward polar residues: residues 491–504 and 513–529; these read KNSTNASVAGNISN and HVSTAQEPKSAEDSPSS. The residue at position 546 (Ser-546) is a Phosphoserine.

Component of the TFIIIC complex composed of TFC1, TFC3, TFC4, TFC6, TFC7 and TFC8. The subunits are organized in two globular domains, tauA and tauB, connected by a proteolysis-sensitive and flexible linker. Interacts with TFC1, TFC4 and TFC6.

The protein resides in the nucleus. It localises to the mitochondrion. Its function is as follows. TFIIIC mediates tRNA and 5S RNA gene activation by binding to intragenic promoter elements. Upstream of the transcription start site, TFIIIC assembles the initiation complex TFIIIB-TFIIIC-tDNA, which is sufficient for RNA polymerase III recruitment and function. Part of the tauB domain of TFIIIC that binds boxB DNA promoter sites of tRNA and similar genes. TFC3 is essential for cell viability. Cooperates with TFC6 in DNA binding. In Saccharomyces cerevisiae (strain ATCC 204508 / S288c) (Baker's yeast), this protein is Transcription factor tau 138 kDa subunit (TFC3).